The chain runs to 385 residues: MSSSTSSVESVEDESCSNECSASFTFDTNNNSRGDQQVDELAEETHMKLSITPTRESFSLSQLERIVTIGKGTFGRVELARDKISGAHYALKVLNIRRVVDMRQTQHVHNEKRVLLQLKHPFIVKMYASEKDSNNLYMIMEFVPGGEMFSYLRASRSFSNSMARFYASEIVCALEYIHSLGIVYRDLKPENLMLSKEGHIKMADFGFAKELRDRTYTICGTPDYLAPESLARTGHNKGVDWWALGILIYEMMVGKPPFRGKTTAEIYDSIIEHKLKFPRSFNLAAKDLVKKLLEVDRTQRIGCMKNGTQDVKDHKWFEKVNWDDTLHLRVEVKKLIGIFLIPIFQPPIVPTLYHPGDTGNFDDYEEDTTGGPLCSQRERDLFAEW.

The Protein kinase domain occupies 63 to 317 (LERIVTIGKG…TQDVKDHKWF (255 aa)). ATP contacts are provided by residues 69-77 (IGKGTFGRV) and Lys92. The Proton acceptor role is filled by Asp186. The AGC-kinase C-terminal domain maps to 318-385 (EKVNWDDTLH…QRERDLFAEW (68 aa)).

It belongs to the protein kinase superfamily. Ser/Thr protein kinase family. cAMP subfamily.

It catalyses the reaction L-seryl-[protein] + ATP = O-phospho-L-seryl-[protein] + ADP + H(+). The enzyme catalyses L-threonyl-[protein] + ATP = O-phospho-L-threonyl-[protein] + ADP + H(+). This Caenorhabditis briggsae protein is cAMP-dependent protein kinase, catalytic subunit-like.